We begin with the raw amino-acid sequence, 436 residues long: Chromosomal replication initiator protein DnaA (436 aa).

The domain I, interacts with DnaA modulators stretch occupies residues 1–69; sequence MSIFTKIKKS…SELYEKETGI (69 aa). Residues 69 to 97 are domain II; the sequence is IKPKIDIVTKEISHRPLTIEEIIEPTTPS. Residues 98 to 311 form a domain III, AAA+ region region; that stretch reads VLIPEYTFES…GMITKINAMS (214 aa). Gly-142, Gly-144, Lys-145, and Thr-146 together coordinate ATP. The tract at residues 312–436 is domain IV, binds dsDNA; that stretch reads KILGISEITL…KNKIQIKKSE (125 aa).

This sequence belongs to the DnaA family. Oligomerizes as a right-handed, spiral filament on DNA at oriC.

It localises to the cytoplasm. Plays an essential role in the initiation and regulation of chromosomal replication. ATP-DnaA binds to the origin of replication (oriC) to initiate formation of the DNA replication initiation complex once per cell cycle. Binds the DnaA box (a 9 base pair repeat at the origin) and separates the double-stranded (ds)DNA. Forms a right-handed helical filament on oriC DNA; dsDNA binds to the exterior of the filament while single-stranded (ss)DNA is stabiized in the filament's interior. The ATP-DnaA-oriC complex binds and stabilizes one strand of the AT-rich DNA unwinding element (DUE), permitting loading of DNA polymerase. After initiation quickly degrades to an ADP-DnaA complex that is not apt for DNA replication. Binds acidic phospholipids. This chain is Chromosomal replication initiator protein DnaA, found in Nautilia profundicola (strain ATCC BAA-1463 / DSM 18972 / AmH).